A 732-amino-acid chain; its full sequence is Elongation factor 2 (732 aa).

Positions 19–228 (ELIRNIGIVA…TKITFKDIVE (210 aa)) constitute a tr-type G domain. Residues 28 to 35 (AHIDHGKT), 94 to 98 (DTPGH), and 148 to 151 (NKID) contribute to the GTP site. His-598 bears the Diphthamide mark.

The protein belongs to the TRAFAC class translation factor GTPase superfamily. Classic translation factor GTPase family. EF-G/EF-2 subfamily.

It is found in the cytoplasm. Functionally, catalyzes the GTP-dependent ribosomal translocation step during translation elongation. During this step, the ribosome changes from the pre-translocational (PRE) to the post-translocational (POST) state as the newly formed A-site-bound peptidyl-tRNA and P-site-bound deacylated tRNA move to the P and E sites, respectively. Catalyzes the coordinated movement of the two tRNA molecules, the mRNA and conformational changes in the ribosome. The chain is Elongation factor 2 (fusA) from Thermoplasma acidophilum (strain ATCC 25905 / DSM 1728 / JCM 9062 / NBRC 15155 / AMRC-C165).